A 370-amino-acid polypeptide reads, in one-letter code: 2-oxoisovalerate dehydrogenase subunit beta, mitochondrial (370 aa).

A mitochondrion-targeting transit peptide spans 1–25; sequence MLRGNNIKKVNSLLVRSFHSTVGNR. Tyr130 contributes to the thiamine diphosphate binding site. The K(+) site is built by Gly156, Leu158, Thr159, and Glu209.

As to quaternary structure, heterotetramer of 2 alpha and 2 beta chains. It depends on thiamine diphosphate as a cofactor.

The protein resides in the mitochondrion matrix. The catalysed reaction is N(6)-[(R)-lipoyl]-L-lysyl-[protein] + 3-methyl-2-oxobutanoate + H(+) = N(6)-[(R)-S(8)-2-methylpropanoyldihydrolipoyl]-L-lysyl-[protein] + CO2. In terms of biological role, the branched-chain alpha-keto dehydrogenase complex catalyzes the overall conversion of alpha-keto acids to acyl-CoA and CO(2). It contains multiple copies of three enzymatic components: branched-chain alpha-keto acid decarboxylase (E1), lipoamide acyltransferase (E2) and lipoamide dehydrogenase (E3). The protein is 2-oxoisovalerate dehydrogenase subunit beta, mitochondrial (bkdB) of Dictyostelium discoideum (Social amoeba).